Here is a 515-residue protein sequence, read N- to C-terminus: Organic cation/carnitine transporter 5 (515 aa).

The Cytoplasmic portion of the chain corresponds to 1–43 (MADSLAPLLPTHIEEDEDTSSPLTFDKILEKSLSDFGFSQFLQ). Residues 44 to 64 (IVLVGLALTFDSQQIFITVFT) traverse the membrane as a helical segment. At 65-124 (DAYPTWHCLDHTICNPATTDICKIPRSAWDWDGGFKGKSVISEFDLECSSSFLRSLPSST) the chain is on the extracellular side. A helical membrane pass occupies residues 125 to 145 (FYVGSIVGGVVLAMIPDGSLG). Over 146-149 (RKQL) the chain is Cytoplasmic. Residues 150-172 (LFFSSFAMSLTGISIFLSSNIWI) form a helical membrane-spanning segment. At 173-177 (YSFLK) the chain is on the extracellular side. The helical transmembrane segment at 178–195 (FVIGFARSQTGTYALVLI) threads the bilayer. 195-202 (ISERISTK) lines the ATP pocket. Over 196–208 (SERISTKWRPRAT) the chain is Cytoplasmic. A helical transmembrane segment spans residues 209–229 (MVPFTLFVLGFMSLSGIAYLV). The Extracellular segment spans residues 230 to 235 (RHASWK). A helical membrane pass occupies residues 236–256 (VLYLCTSIPAGIHSIFIYFFA). Over 257-320 (LESPRWLHLE…LFIIKWAFRR (64 aa)) the chain is Cytoplasmic. Residues 321-341 (VTLVMIIMFGLGMSYYGVPLA) traverse the membrane as a helical segment. Over 342 to 350 (VRDIKVNIY) the chain is Extracellular. The chain crosses the membrane as a helical span at residues 351 to 371 (MSEALNAMVELPTFVVTPILL). At 372-379 (EQFSRRSS) the chain is on the cytoplasmic side. Residues 380–400 (VLVNCLIGGASGVLCFVMSLY) traverse the membrane as a helical segment. Residues 401-411 (GRTKIAFALEL) are Extracellular-facing. The helical transmembrane segment at 412-432 (GSFFCARIGFNLMAIYLVELF) threads the bilayer. Residues 433–441 (PTCVRNSAT) lie on the Cytoplasmic side of the membrane. A helical transmembrane segment spans residues 442–462 (MMLRQALVVGGACCPLIASLG). At 463–467 (RNVPS) the chain is on the extracellular side. The helical transmembrane segment at 468-488 (LSFAVFGFAMSGLGLFALLLP) threads the bilayer. The Cytoplasmic segment spans residues 489–515 (ETKGLSLCDTMEEQEQRDQALKTSHSC).

This sequence belongs to the major facilitator (TC 2.A.1) superfamily. Organic cation transporter (TC 2.A.1.19) family. Mostly expressed in leaves and siliques, and, to a lower extent, in roots, stems and flowers.

It is found in the vacuole membrane. In terms of biological role, high affinity carnitine transporter involved in the active cellular uptake of carnitine. Also transports organic cations. The polypeptide is Organic cation/carnitine transporter 5 (OCT5) (Arabidopsis thaliana (Mouse-ear cress)).